Consider the following 319-residue polypeptide: BTB/POZ domain-containing adapter for CUL3-mediated RhoA degradation protein 2 (319 aa).

The region spanning 31-99 (KYIRLNVGGC…LRDDTIALPK (69 aa)) is the BTB domain.

Belongs to the BACURD family. In terms of assembly, component of the BCR(TNFAIP1) E3 ubiquitin ligase complex, at least composed of cul3, tnfaip1/bacurd2 and rbx1.

The protein localises to the cytoplasm. The protein resides in the nucleus. Its subcellular location is the endosome. It participates in protein modification; protein ubiquitination. Substrate-specific adapter of a BCR (BTB-CUL3-RBX1) E3 ubiquitin-protein ligase complex involved in regulation of cytoskeleton structure. The BCR(TNFAIP1) E3 ubiquitin ligase complex mediates the ubiquitination of target proteins, leading to their degradation by the proteasome. In Xenopus laevis (African clawed frog), this protein is BTB/POZ domain-containing adapter for CUL3-mediated RhoA degradation protein 2 (tnfaip1).